Here is a 287-residue protein sequence, read N- to C-terminus: Putative sugar uptake protein EF_0928 (287 aa).

10 helical membrane-spanning segments follow: residues 5–27, 32–49, 53–71, 84–106, 116–134, 155–177, 182–200, 207–229, 234–256, and 265–284; these read IALV…GGSA, LGMT…FFVI, LTTA…WSLG, VSVG…GAVF, FVVG…YLTA, IRAL…ATGL, IILP…FAFK, FVWM…LLTM, LAIS…IFLL, and MFYV…LLGY.

This sequence belongs to the GRP transporter (TC 2.A.7.5) family.

It localises to the cell membrane. The protein is Putative sugar uptake protein EF_0928 of Enterococcus faecalis (strain ATCC 700802 / V583).